We begin with the raw amino-acid sequence, 110 residues long: Small ribosomal subunit protein uS10m (110 aa).

This sequence belongs to the universal ribosomal protein uS10 family.

Its subcellular location is the mitochondrion. This Pisum sativum (Garden pea) protein is Small ribosomal subunit protein uS10m (RPS10).